The chain runs to 162 residues: Endoribonuclease YbeY (162 aa).

H126, H130, and H136 together coordinate Zn(2+).

This sequence belongs to the endoribonuclease YbeY family. It depends on Zn(2+) as a cofactor.

It is found in the cytoplasm. Functionally, single strand-specific metallo-endoribonuclease involved in late-stage 70S ribosome quality control and in maturation of the 3' terminus of the 16S rRNA. This is Endoribonuclease YbeY from Fusobacterium nucleatum subsp. nucleatum (strain ATCC 25586 / DSM 15643 / BCRC 10681 / CIP 101130 / JCM 8532 / KCTC 2640 / LMG 13131 / VPI 4355).